Here is a 59-residue protein sequence, read N- to C-terminus: Small ribosomal subunit protein eS30 (59 aa).

A disordered region spans residues 1–35 (KVHGSLARAGKVRGQTPKVAKQEKKKKKTGRAKRR). The segment covering 23–35 (EKKKKKTGRAKRR) has biased composition (basic residues). Residue Lys51 is modified to N6-succinyllysine.

It belongs to the eukaryotic ribosomal protein eS30 family.

The sequence is that of Small ribosomal subunit protein eS30 (Fau) from Mus spicilegus (Steppe mouse).